We begin with the raw amino-acid sequence, 345 residues long: RNA pseudouridine synthase 1 (345 aa).

Asp134 is a catalytic residue.

Belongs to the pseudouridine synthase RluA family.

The catalysed reaction is a uridine in RNA = a pseudouridine in RNA. The protein is RNA pseudouridine synthase 1 of Oryza sativa subsp. japonica (Rice).